A 316-amino-acid chain; its full sequence is Cyclin-dependent kinase inhibitor 1C (316 aa).

At Arg107 the chain carries Omega-N-methylarginine. A disordered region spans residues 124 to 153 (ESLDGLEEAPEQLPSVPVPAPASTPPPVPV). Over residues 139 to 153 (VPVPAPASTPPPVPV) the composition is skewed to pro residues. 9 consecutive repeat copies span residues 156–159 (PAPA), 160–163 (PAPA), 180–183 (PAPA), 184–187 (PAPA), 188–191 (PAPA), 198–201 (PAPA), 202–205 (PAPA), 206–209 (PAPA), and 210–213 (PAPA). The 9 X 4 AA repeats of P-A-P-A stretch occupies residues 156-213 (PAPAPAPAPVAAPVAAPVAVAVLAPAPAPAPAPAPAPAPVAAPAPAPAPAPAPAPAPA). Residues 181 to 217 (APAPAPAPAPAPAPVAAPAPAPAPAPAPAPAPAPAPD) show a composition bias toward pro residues. The segment at 181-260 (APAPAPAPAP…AAGTAAASAN (80 aa)) is disordered. Residues 223-233 (SAEQGANQGQR) are compositionally biased toward polar residues. The segment covering 251 to 260 (AAGTAAASAN) has biased composition (low complexity). Phosphoserine is present on Ser268. The short motif at 278 to 281 (KRKR) is the Nuclear localization signal element. The disordered stretch occupies residues 278 to 316 (KRKRSAPEKSSGDVPAPCPSPSAAPGVGSVEQTPRKRLR).

This sequence belongs to the CDI family. In terms of assembly, interacts with PCNA. As to expression, expressed in the heart, brain, lung, skeletal muscle, kidney, pancreas and testis. Expressed in the eye. High levels are seen in the placenta while low levels are seen in the liver.

Its subcellular location is the nucleus. Functionally, potent tight-binding inhibitor of several G1 cyclin/CDK complexes (cyclin E-CDK2, cyclin D2-CDK4, and cyclin A-CDK2) and, to lesser extent, of the mitotic cyclin B-CDC2. Negative regulator of cell proliferation. May play a role in maintenance of the non-proliferative state throughout life. This is Cyclin-dependent kinase inhibitor 1C (CDKN1C) from Homo sapiens (Human).